Consider the following 516-residue polypeptide: RxLR effector protein PITG_15127 (516 aa).

The N-terminal stretch at 1-22 is a signal peptide; it reads MRLYSGAILCTIATLLISVSTA. The RxLR-dEER signature appears at 48–63; the sequence is RFLRVSTQNTENGENR.

This sequence belongs to the RxLR effector family.

Its subcellular location is the secreted. The protein localises to the host cell membrane. It is found in the host nucleus. The protein resides in the host cytoplasm. In terms of biological role, effector that enhances P.infestans colonization of Nicotiana benthamiana leaves. This chain is RxLR effector protein PITG_15127, found in Phytophthora infestans (strain T30-4) (Potato late blight agent).